A 287-amino-acid chain; its full sequence is uncharacterized protein (287 aa).

Positions 115–287 (SLLSKETIKS…KKFLKKKLIS (173 aa)) constitute an ATP-grasp domain.

This is an uncharacterized protein from Mycoplasma genitalium (strain ATCC 33530 / DSM 19775 / NCTC 10195 / G37) (Mycoplasmoides genitalium).